The chain runs to 653 residues: MQGKKQRITQLTELLDEAARVYEQEDREIMSNFEYDKLYDELKKLEEETGIVLAGSPTRKVGYEILSELPKERHESAMLSLDKTKEVPALIDWLGNKEGILSWKMDGLTIVLTYRNGELVKAVTRGNGEVGEVVTNNAKVFKNLPLTIPYEGELIIRGEAVIRYSDFEMINAQIPDADAKYKNPRNLCSGSVRQLNNAITAKRNVNFFAFALIRMDEMNRFKTMMEQFNWLKELGFDVVEEKLVTAENMAETMEYFESHIITNDFPSDGLVLFFNDIAYGESLGRTSKFPRNGIAFKWRDEIKETTLQEIEWSASRTGLINPVAIFEPVELEGTTVSRASLHNISIMEGLELGLGDKVTVYKANMIIPQIADNLTRSGHLPIPKTCPVCGGDTMIKQDSDVKSLYCMNPECLAKKIKSFTHFVSRDAMNIEGLSEATIEKLIAKGLIKELADIFHVKDFKEEITTMEGFGEKSFRNLVDSVEKARTPILAKFIYSLGIANVGLANAKLICKEFGYDFNKVSNATVDELTQIPQIGYVIAEAFVSYFQKPENKLIIEDLLKEITFEKEEAAGGSEKLKGLTFVITGSVEHFTNRNEVKDVIEQHGGKVTGSVTAKTNYLINNDNTSSSSKNKKARELGIPVITEEEFIQLLNEA.

Residues 32–36 (NFEYD) and 80–81 (SL) each bind NAD(+). Lys104 serves as the catalytic N6-AMP-lysine intermediate. Residues Arg125, Glu159, and Lys297 each contribute to the NAD(+) site. 4 residues coordinate Zn(2+): Cys386, Cys389, Cys406, and Cys411. The region spanning 571–653 (GGSEKLKGLT…EEFIQLLNEA (83 aa)) is the BRCT domain.

This sequence belongs to the NAD-dependent DNA ligase family. LigA subfamily. It depends on Mg(2+) as a cofactor. Requires Mn(2+) as cofactor.

The enzyme catalyses NAD(+) + (deoxyribonucleotide)n-3'-hydroxyl + 5'-phospho-(deoxyribonucleotide)m = (deoxyribonucleotide)n+m + AMP + beta-nicotinamide D-nucleotide.. Its function is as follows. DNA ligase that catalyzes the formation of phosphodiester linkages between 5'-phosphoryl and 3'-hydroxyl groups in double-stranded DNA using NAD as a coenzyme and as the energy source for the reaction. It is essential for DNA replication and repair of damaged DNA. This chain is DNA ligase, found in Lachnoclostridium phytofermentans (strain ATCC 700394 / DSM 18823 / ISDg) (Clostridium phytofermentans).